Reading from the N-terminus, the 485-residue chain is Cholesterol 16,22-dihydroxylase CYP90G4 (485 aa).

A helical membrane pass occupies residues 4–24 (VVILFFLFPTLLVLVVAVLGL). Residue Cys-432 coordinates heme.

Belongs to the cytochrome P450 family. As to expression, mainly expressed in leaves and, at low levels, in roots and stems.

It is found in the membrane. The catalysed reaction is cholesterol + 2 reduced [NADPH--hemoprotein reductase] + 2 O2 = (16S,22S)-dihydroxycholesterol + 2 oxidized [NADPH--hemoprotein reductase] + 2 H2O + 2 H(+). It participates in steroid metabolism; cholesterol metabolism. Its function is as follows. Involved in the biosynthesis of spiroketal steroid and saponin natural products from cholesterol such as diosgenin and analogs (e.g. furostanol and spirostanol), plant defense compounds used as main precursors for the industrial production of steroid hormones. During the 5,6-spiroketalization of cholesterol, catalyzes the hydroxylation of cholesterol to form 16S,22S-dihydroxycholesterol and, possibly, the subsequent conversion of 16S,22S-dihydroxycholesterol into 16-oxo-22-hydroxy-cholesterol and 16-hydroxy-22-oxo-cholesterol. 16-hydroxy-22-oxo-cholesterol submit a spontaneous reaction leading to the production of furostanol-type steroid diastereomers, precursors of diosgenin. This Paris polyphylla (Daiswa polyphylla) protein is Cholesterol 16,22-dihydroxylase CYP90G4.